Here is a 482-residue protein sequence, read N- to C-terminus: Probable polyamine transporter At1g31820 (482 aa).

Helical transmembrane passes span 36–56, 66–86, 94–114, 143–163, 171–191, 254–274, 294–314, 344–364, 367–387, 406–426, and 429–449; these read VSML…PFGA, LLAL…EALI, FPIN…FWGF, VPAL…TLLL, LTIV…PFAV, VIFV…AIPL, GWLQ…MFLA, TPLL…GLSF, IIAA…IAFV, TVGS…VIVL, and IKVA…KPCL.

It belongs to the amino acid-polyamine-organocation (APC) superfamily. Polyamine:cation symporter (PHS) (TC 2.A.3.12) family.

The protein localises to the cell membrane. In terms of biological role, probable cell membrane polyamine/proton symporter involved in the polyamine uptake in cells. This Arabidopsis thaliana (Mouse-ear cress) protein is Probable polyamine transporter At1g31820.